A 509-amino-acid polypeptide reads, in one-letter code: Maturase K (509 aa).

Belongs to the intron maturase 2 family. MatK subfamily.

It is found in the plastid. Its subcellular location is the chloroplast. Usually encoded in the trnK tRNA gene intron. Probably assists in splicing its own and other chloroplast group II introns. The polypeptide is Maturase K (Opuntia quimilo (Cactus)).